The primary structure comprises 615 residues: MAERAPEPGAEAEAGAGGEAAAEEGAAGRKARGRPRLTESDRARRRLESRKKYDVRRVYLGEAHGPWVDLRRRSGWSDAKLAAYLISLERGQRSGRHGKPWEQVPKKPKRKKRRRRNVNCLKNVVIWYEDHKHRCPYEPHLAELDPTFGLYTTAVWQCEAGHRYFQDLHSPLKPLSDSEPDSDKVGSGLVAGSSDSSSSGSSSDSEEPPETQPAKASAAAAALTPASPTGSSGLITQEGVHIPFDVHHVESLAEQGTPLCQNPAGSGPEALETVVCVPVPMQVGTGPGTLFENMPQEALGEVVASCPVSGMVPGSQVIIIAGPGYDALTAEGIRLNVAAGGGTPSSSLGEEVPCAMMEGVAAYTQTEPEGTQHSTMDTTSIASIETKKEKEDLYMLKEEKEDSVAPELAELAATVPENAEAEAEVDGEELDSSEMSAIIYEIPKEPEKRRRSKRSRVMDADGLLEMFHCPYEGCSQVYVALSSFQNHVNLVHRKGKTKVCPHPGCGKKFYLSNHLRRHMIIHSGVREFTCETCGKSFKRKNHLEVHRRTHTGETPLQCEICGYQCRQRASLNWHMKKHTAEVQYNFTCDRCGKRFEKLDSVKFHTLKSHPDHKPT.

3 disordered regions span residues Met-1–Arg-46, Arg-93–Arg-115, and Pro-174–Ile-235. Positions Glu-7 to Gly-25 are enriched in low complexity. Over residues Lys-106–Arg-115 the composition is skewed to basic residues. Composition is skewed to low complexity over residues Gly-192–Ser-203 and Gln-212–Ser-232. 5 consecutive C2H2-type zinc fingers follow at residues Phe-467 to His-492, Lys-498 to His-522, Phe-528 to His-550, Leu-556 to His-578, and Phe-586 to His-609.

The protein belongs to the krueppel C2H2-type zinc-finger protein family. In terms of assembly, interacts with NR5A1. As to expression, highly expressed in testis and spleen. Moderately expressed in lung, adrenal gland, uterus, and ovary. Very low expression in pancreas, heart, skeletal muscle, adipose tissue, kidney, and liver.

The protein resides in the nucleus. In terms of biological role, transcriptional repressor. May repress NR5A1, PPARG, NR1H3, NR4A2, ESR1 and NR3C1 transcriptional activity. This is Zinc finger protein 653 (Znf653) from Mus musculus (Mouse).